The sequence spans 317 residues: Porphobilinogen deaminase (317 aa).

Cys-245 is modified (S-(dipyrrolylmethanemethyl)cysteine).

This sequence belongs to the HMBS family. Monomer. Dipyrromethane is required as a cofactor.

It carries out the reaction 4 porphobilinogen + H2O = hydroxymethylbilane + 4 NH4(+). The protein operates within porphyrin-containing compound metabolism; protoporphyrin-IX biosynthesis; coproporphyrinogen-III from 5-aminolevulinate: step 2/4. Its pathway is porphyrin-containing compound metabolism; chlorophyll biosynthesis. In terms of biological role, tetrapolymerization of the monopyrrole PBG into the hydroxymethylbilane pre-uroporphyrinogen in several discrete steps. The chain is Porphobilinogen deaminase from Synechococcus sp. (strain CC9605).